Reading from the N-terminus, the 453-residue chain is Growth/differentiation factor 9 (453 aa).

The signal sequence occupies residues 1–25 (MALPNKFFLWFCCFAWLCFPISLDS). Residues 26–318 (QPSRGEAQIV…EGVRLSRHRR (293 aa)) constitute a propeptide that is removed on maturation. N-linked (GlcNAc...) asparagine glycosylation is found at Asn106, Asn163, Asn236, Asn255, and Asn269. Residues 281 to 300 (SLHPKRKPSQDPDQKRGLSA) form a disordered region. A glycan (N-linked (GlcNAc...) asparagine) is linked at Asn337. Disulfide bonds link Cys352–Cys418, Cys381–Cys450, and Cys385–Cys452.

This sequence belongs to the TGF-beta family. In terms of assembly, homodimer or heterodimer (Potential). But, in contrast to other members of this family, cannot be disulfide-linked. In terms of processing, phosphorylated; phosphorylation is critical for GDF9 function.

It localises to the secreted. Required for ovarian folliculogenesis. This chain is Growth/differentiation factor 9 (GDF9), found in Bos taurus (Bovine).